A 464-amino-acid chain; its full sequence is Arginine biosynthesis bifunctional protein ArgJ, chloroplastic (464 aa).

Residues Thr208, Lys234, Thr245, Glu332, Asn459, and Thr464 each contribute to the substrate site. Residue Thr245 is the Nucleophile of the active site.

The protein belongs to the ArgJ family. As to quaternary structure, heterodimer of an alpha and a beta chain.

Its subcellular location is the plastid. It localises to the chloroplast. It catalyses the reaction N(2)-acetyl-L-ornithine + L-glutamate = N-acetyl-L-glutamate + L-ornithine. The enzyme catalyses L-glutamate + acetyl-CoA = N-acetyl-L-glutamate + CoA + H(+). The protein operates within amino-acid biosynthesis; L-arginine biosynthesis; L-ornithine and N-acetyl-L-glutamate from L-glutamate and N(2)-acetyl-L-ornithine (cyclic): step 1/1. Its pathway is amino-acid biosynthesis; L-arginine biosynthesis; N(2)-acetyl-L-ornithine from L-glutamate: step 1/4. Catalyzes two activities which are involved in the cyclic version of arginine biosynthesis: the synthesis of acetylglutamate from glutamate and acetyl-CoA, and of ornithine by transacetylation between acetylornithine and glutamate. This is Arginine biosynthesis bifunctional protein ArgJ, chloroplastic from Zea mays (Maize).